We begin with the raw amino-acid sequence, 219 residues long: Ribosomal RNA small subunit methyltransferase G (219 aa).

S-adenosyl-L-methionine contacts are provided by residues G85, L90, 136–137, and R151; that span reads VE.

This sequence belongs to the methyltransferase superfamily. RNA methyltransferase RsmG family.

It localises to the cytoplasm. The catalysed reaction is guanosine(527) in 16S rRNA + S-adenosyl-L-methionine = N(7)-methylguanosine(527) in 16S rRNA + S-adenosyl-L-homocysteine. Functionally, specifically methylates the N7 position of guanine in position 527 of 16S rRNA. The chain is Ribosomal RNA small subunit methyltransferase G from Cellvibrio japonicus (strain Ueda107) (Pseudomonas fluorescens subsp. cellulosa).